The sequence spans 111 residues: Photosystem II reaction center Psb28 protein (111 aa).

This sequence belongs to the Psb28 family. Part of the photosystem II complex.

The protein resides in the cellular thylakoid membrane. This Acaryochloris marina (strain MBIC 11017) protein is Photosystem II reaction center Psb28 protein.